Consider the following 352-residue polypeptide: Transcription factor RSL2 (352 aa).

The span at 160 to 169 shows a compositional bias: polar residues; that stretch reads SVTTTKSLTG. Positions 160–277 are disordered; it reads SVTTTKSLTG…ASRGAATDPQ (118 aa). Over residues 183–192 the composition is skewed to basic residues; the sequence is KRARVNKRAQ. The span at 223–232 shows a compositional bias: polar residues; sequence SRQNSSTTFC. Residues 272 to 285 are basic motif; it reads AATDPQSLYARKRR. The region spanning 272–321 is the bHLH domain; the sequence is AATDPQSLYARKRRERINERLRILQNLVPNGTKVDISTMLEEAVHYVKFL. A helix-loop-helix motif region spans residues 286-321; that stretch reads ERINERLRILQNLVPNGTKVDISTMLEEAVHYVKFL.

Homodimer. As to expression, expressed in roots. Expressed in root epidermal hair cells.

The protein resides in the nucleus. Transcription factor involved in the regulation of root hair elongation. Does not seem to be a direct transcriptional target of RHD6 and RSL1. Involved in the regulation of root hair elongation in response to low phosphate. The protein is Transcription factor RSL2 of Arabidopsis thaliana (Mouse-ear cress).